A 115-amino-acid polypeptide reads, in one-letter code: NADH-ubiquinone oxidoreductase chain 3 (115 aa).

3 helical membrane passes run 4 to 24, 55 to 75, and 87 to 107; these read FIVLLVNISLASCLILIAFWL, FFLVAITFLLFDLEIALLLPL, and TMLTSFILVSVLAMGLAYEWL.

The protein belongs to the complex I subunit 3 family. Core subunit of respiratory chain NADH dehydrogenase (Complex I) which is composed of 45 different subunits. Interacts with TMEM186. Interacts with TMEM242.

The protein localises to the mitochondrion inner membrane. It carries out the reaction a ubiquinone + NADH + 5 H(+)(in) = a ubiquinol + NAD(+) + 4 H(+)(out). Functionally, core subunit of the mitochondrial membrane respiratory chain NADH dehydrogenase (Complex I) which catalyzes electron transfer from NADH through the respiratory chain, using ubiquinone as an electron acceptor. Essential for the catalytic activity of complex I. The chain is NADH-ubiquinone oxidoreductase chain 3 from Reithrodontomys megalotis (Western harvest mouse).